The chain runs to 428 residues: Serine--tRNA ligase (428 aa).

Thr231–Glu233 contributes to the L-serine binding site. Arg262–Glu264 contacts ATP. Glu285 contacts L-serine. Position 349–352 (Glu349–Ser352) interacts with ATP. Position 385 (Ser385) interacts with L-serine.

Belongs to the class-II aminoacyl-tRNA synthetase family. Type-1 seryl-tRNA synthetase subfamily. In terms of assembly, homodimer. The tRNA molecule binds across the dimer.

It localises to the cytoplasm. The enzyme catalyses tRNA(Ser) + L-serine + ATP = L-seryl-tRNA(Ser) + AMP + diphosphate + H(+). The catalysed reaction is tRNA(Sec) + L-serine + ATP = L-seryl-tRNA(Sec) + AMP + diphosphate + H(+). It participates in aminoacyl-tRNA biosynthesis; selenocysteinyl-tRNA(Sec) biosynthesis; L-seryl-tRNA(Sec) from L-serine and tRNA(Sec): step 1/1. Its function is as follows. Catalyzes the attachment of serine to tRNA(Ser). Is also able to aminoacylate tRNA(Sec) with serine, to form the misacylated tRNA L-seryl-tRNA(Sec), which will be further converted into selenocysteinyl-tRNA(Sec). The protein is Serine--tRNA ligase of Cellvibrio japonicus (strain Ueda107) (Pseudomonas fluorescens subsp. cellulosa).